We begin with the raw amino-acid sequence, 147 residues long: Small ribosomal subunit protein uS12 (147 aa).

It belongs to the universal ribosomal protein uS12 family. In terms of assembly, part of the 30S ribosomal subunit.

Its function is as follows. With S4 and S5 plays an important role in translational accuracy. Located at the interface of the 30S and 50S subunits. The protein is Small ribosomal subunit protein uS12 of Methanococcus maripaludis (strain DSM 14266 / JCM 13030 / NBRC 101832 / S2 / LL).